A 138-amino-acid chain; its full sequence is Secreted RxLR effector protein 91 (138 aa).

A signal peptide spans 1-18 (MVIPHIICLPMALHLWTC). Residues 34–37 (RRLR) carry the RxLR motif. N-linked (GlcNAc...) asparagine glycosylation is present at asparagine 93.

It belongs to the RxLR effector family.

The protein localises to the secreted. The protein resides in the host nucleus. Secreted effector that completely suppresses the host cell death induced by cell death-inducing proteins. In Plasmopara viticola (Downy mildew of grapevine), this protein is Secreted RxLR effector protein 91.